The chain runs to 637 residues: tRNA uridine 5-carboxymethylaminomethyl modification enzyme MnmG (637 aa).

14–19 (GAGHAG) contributes to the FAD binding site. 279–293 (GPRYCPSIEDKVVRF) contributes to the NAD(+) binding site.

This sequence belongs to the MnmG family. In terms of assembly, homodimer. Heterotetramer of two MnmE and two MnmG subunits. FAD is required as a cofactor.

The protein resides in the cytoplasm. Functionally, NAD-binding protein involved in the addition of a carboxymethylaminomethyl (cmnm) group at the wobble position (U34) of certain tRNAs, forming tRNA-cmnm(5)s(2)U34. The sequence is that of tRNA uridine 5-carboxymethylaminomethyl modification enzyme MnmG from Desulfitobacterium hafniense (strain Y51).